We begin with the raw amino-acid sequence, 156 residues long: Endogenous retrovirus group K member 104 Pro protein (156 aa).

The Peptidase A2 domain maps to 21–96 (FEGLVDTEAD…IPLNLWGQDL (76 aa)). Asp-26 is a catalytic residue. One can recognise a G-patch domain in the interval 111-156 (YSPTSQKIMTKMGYIPGKGLGKNEDGIKVPVEAKINQKREGIGYPF).

The protein belongs to the peptidase A2 family. HERV class-II K(HML-2) subfamily. Active as a homodimer. Post-translationally, autoproteolytically processed at the N-terminus. Expected C-terminal autoprocessing not detected. The sequence shown is that of the processed Pro protein.

The enzyme catalyses Processing at the authentic HIV-1 PR recognition site and release of the mature p17 matrix and the p24 capsid protein, as a result of the cleavage of the -SQNY-|-PIVQ- cleavage site.. In terms of biological role, retroviral proteases have roles in the processing of the primary translation products and the maturation of the viral particle. Endogenous Pro proteins may have kept, lost or modified their original function during evolution. In Homo sapiens (Human), this protein is Endogenous retrovirus group K member 104 Pro protein (HERV-K104).